The primary structure comprises 70 residues: Testis-expressed protein 53 (70 aa).

Expressed in Testis.

In Homo sapiens (Human), this protein is Testis-expressed protein 53.